The following is a 670-amino-acid chain: Tripeptidyl-peptidase SED1 (670 aa).

Positions Met-1–Ala-20 are cleaved as a signal peptide. Positions Ala-21–Ser-231 are cleaved as a propeptide — removed in mature form. One can recognise a Peptidase S53 domain in the interval Leu-241–Leu-669. Active-site charge relay system residues include Glu-318 and Asp-322. Asn-334, Asn-387, Asn-488, Asn-508, and Asn-551 each carry an N-linked (GlcNAc...) asparagine glycan. The active-site Charge relay system is Ser-586. Ca(2+) contacts are provided by Asp-627, Val-628, Gly-647, and Asp-649.

The cofactor is Ca(2+).

It is found in the secreted. Its subcellular location is the extracellular space. The catalysed reaction is Release of an N-terminal tripeptide from a polypeptide.. Secreted tripeptidyl-peptidase which degrades proteins at acidic pHs and is involved in virulence. In Arthroderma otae (strain ATCC MYA-4605 / CBS 113480) (Microsporum canis), this protein is Tripeptidyl-peptidase SED1 (SED1).